Consider the following 211-residue polypeptide: tRNA (guanosine(18)-2'-O)-methyltransferase (211 aa).

Positions 103, 146, and 155 each coordinate S-adenosyl-L-methionine.

This sequence belongs to the class IV-like SAM-binding methyltransferase superfamily. RNA methyltransferase TrmH family. As to quaternary structure, homodimer.

The enzyme catalyses guanosine(18) in tRNA + S-adenosyl-L-methionine = 2'-O-methylguanosine(18) in tRNA + S-adenosyl-L-homocysteine + H(+). Functionally, catalyzes the 2'-O methylation of guanosine at position 18 in tRNA. Type II methylase, which methylates only a subset of tRNA species. The polypeptide is tRNA (guanosine(18)-2'-O)-methyltransferase (Aquifex aeolicus (strain VF5)).